The primary structure comprises 487 residues: GTPase Der (487 aa).

The disordered stretch occupies residues 1–20; that stretch reads MAKAVRKSNSEETVPIKAPR. EngA-type G domains lie at 28-197 and 225-401; these read PVVS…SSKP and FRLA…SRSR. GTP-binding positions include 34–41, 83–87, 149–152, 231–238, 278–282, and 343–346; these read GRQNVGKS, DTPGL, NKAD, GKPNSGKS, DTAGI, and NKWD. The KH-like domain maps to 402 to 486; sequence RKVSTSELNK…PVRLEFRSDR (85 aa).

This sequence belongs to the TRAFAC class TrmE-Era-EngA-EngB-Septin-like GTPase superfamily. EngA (Der) GTPase family. In terms of assembly, associates with the 50S ribosomal subunit.

GTPase that plays an essential role in the late steps of ribosome biogenesis. In Leptospira borgpetersenii serovar Hardjo-bovis (strain L550), this protein is GTPase Der.